Consider the following 139-residue polypeptide: Protein cornichon homolog 4 (139 aa).

3 helical membrane passes run 5–25, 57–77, and 118–138; these read VFVF…YFII, LVTV…NLPV, and LGFH…ALIN.

It belongs to the cornichon family. Interacts with Sec23/24 complex components SEC24B and SEC24D. Interacts with CCR5. Interacts with ADRB2 in the early secretory pathway.

It is found in the membrane. The protein resides in the endoplasmic reticulum. The protein localises to the endoplasmic reticulum-Golgi intermediate compartment. Functionally, involved in G protein-coupled receptors (GPCRs) trafficking from the endoplasmic reticulum to the cell surface; it promotes the exit of GPCRs from the early secretory pathway, likely through interaction with the COPII machinery. This Bos taurus (Bovine) protein is Protein cornichon homolog 4 (CNIH4).